A 194-amino-acid chain; its full sequence is MEKLQQRVKEDGVVIDGGILKVDSFLNHQIDPELMYEVGETIYNKYKDEGITKVLTIEASGIAPAIMTALKFKVPCLFAKKSVPSTLTEEVYHTDIHSYTKNKTSHVVVSKRFLSENDRVVIIDDFLANGEAALGLYNLVQQAGATCVGVGIVVEKSFQSGKQRLLDAGLDVTSLCEIAALDNGKVTLVGEGEL.

Xanthine is bound by residues L20 and N27. A 5-phospho-alpha-D-ribose 1-diphosphate-binding site is contributed by 128–132 (ANGEA). A xanthine-binding site is contributed by K156.

The protein belongs to the purine/pyrimidine phosphoribosyltransferase family. Xpt subfamily. Homodimer.

It localises to the cytoplasm. The catalysed reaction is XMP + diphosphate = xanthine + 5-phospho-alpha-D-ribose 1-diphosphate. It functions in the pathway purine metabolism; XMP biosynthesis via salvage pathway; XMP from xanthine: step 1/1. In terms of biological role, converts the preformed base xanthine, a product of nucleic acid breakdown, to xanthosine 5'-monophosphate (XMP), so it can be reused for RNA or DNA synthesis. This chain is Xanthine phosphoribosyltransferase, found in Macrococcus caseolyticus (strain JCSC5402) (Macrococcoides caseolyticum).